The sequence spans 357 residues: Homoserine kinase (357 aa).

This sequence belongs to the GHMP kinase family. Homoserine kinase subfamily. As to quaternary structure, homodimer.

It catalyses the reaction L-homoserine + ATP = O-phospho-L-homoserine + ADP + H(+). It functions in the pathway amino-acid biosynthesis; L-threonine biosynthesis; L-threonine from L-aspartate: step 4/5. Functionally, commits homoserine to the threonine biosynthesis pathway by catalyzing its O-phosphorylation. The sequence is that of Homoserine kinase (THR1) from Candida albicans (strain SC5314 / ATCC MYA-2876) (Yeast).